Consider the following 288-residue polypeptide: ATP synthase gamma chain (288 aa).

This sequence belongs to the ATPase gamma chain family. As to quaternary structure, F-type ATPases have 2 components, CF(1) - the catalytic core - and CF(0) - the membrane proton channel. CF(1) has five subunits: alpha(3), beta(3), gamma(1), delta(1), epsilon(1). CF(0) has three main subunits: a, b and c.

The protein resides in the cell inner membrane. Produces ATP from ADP in the presence of a proton gradient across the membrane. The gamma chain is believed to be important in regulating ATPase activity and the flow of protons through the CF(0) complex. The sequence is that of ATP synthase gamma chain from Vibrio vulnificus (strain CMCP6).